Here is a 183-residue protein sequence, read N- to C-terminus: Inner membrane-spanning protein YciB (183 aa).

The next 5 helical transmembrane spans lie at 22-42 (IYAATGVLIAATAIQLVITYL), 50-70 (MHLATFAMVTVFGSLTLFFHD), 72-92 (AFIKWKVSIVYALFAIGLIAS), 118-138 (VTWYWVGFFVLCSFANIYIAF), and 148-168 (FKVFGLTALTLINTVITVVYL).

This sequence belongs to the YciB family.

The protein resides in the cell inner membrane. Plays a role in cell envelope biogenesis, maintenance of cell envelope integrity and membrane homeostasis. This is Inner membrane-spanning protein YciB from Shewanella frigidimarina (strain NCIMB 400).